Consider the following 207-residue polypeptide: Large ribosomal subunit protein uL4 (207 aa).

The segment at 48-78 (THKVKTRSEVRGGGRKPWRQKGTGRARQGSI) is disordered. The segment covering 60–71 (GGRKPWRQKGTG) has biased composition (basic residues).

The protein belongs to the universal ribosomal protein uL4 family. As to quaternary structure, part of the 50S ribosomal subunit.

In terms of biological role, one of the primary rRNA binding proteins, this protein initially binds near the 5'-end of the 23S rRNA. It is important during the early stages of 50S assembly. It makes multiple contacts with different domains of the 23S rRNA in the assembled 50S subunit and ribosome. Its function is as follows. Forms part of the polypeptide exit tunnel. The polypeptide is Large ribosomal subunit protein uL4 (Bacillus pumilus (strain SAFR-032)).